Consider the following 82-residue polypeptide: RNA-binding protein Hfq (82 aa).

One can recognise a Sm domain in the interval 10-70 (DTFLNHVRKN…ISTIMPAQPV (61 aa)).

Belongs to the Hfq family. In terms of assembly, homohexamer.

RNA chaperone that binds small regulatory RNA (sRNAs) and mRNAs to facilitate mRNA translational regulation in response to envelope stress, environmental stress and changes in metabolite concentrations. Also binds with high specificity to tRNAs. This Parvibaculum lavamentivorans (strain DS-1 / DSM 13023 / NCIMB 13966) protein is RNA-binding protein Hfq.